We begin with the raw amino-acid sequence, 231 residues long: Ribonuclease HII (231 aa).

Residues 33–222 (WPVAGADEAG…FREAQEQPLA (190 aa)) enclose the RNase H type-2 domain. Residues Asp-39, Glu-40, and Asp-130 each contribute to the a divalent metal cation site.

It belongs to the RNase HII family. It depends on Mn(2+) as a cofactor. Mg(2+) is required as a cofactor.

The protein localises to the cytoplasm. The enzyme catalyses Endonucleolytic cleavage to 5'-phosphomonoester.. Functionally, endonuclease that specifically degrades the RNA of RNA-DNA hybrids. The protein is Ribonuclease HII of Sinorhizobium fredii (strain NBRC 101917 / NGR234).